The following is a 109-amino-acid chain: B melanoma antigen 2 (109 aa).

Positions 1–17 (MAAGVVFLALSAQLLQA) are cleaved as a signal peptide.

It belongs to the BAGE family. In terms of tissue distribution, not expressed in normal tissues except in testis. Expressed in 22% of melanomas, in bladder and lung carcinomas.

Its subcellular location is the secreted. In terms of biological role, unknown. Candidate gene encoding tumor antigens. This chain is B melanoma antigen 2 (BAGE2), found in Homo sapiens (Human).